A 72-amino-acid chain; its full sequence is uncharacterized protein (72 aa).

The helical transmembrane segment at 46–66 (AIFVFNLCFIPNLCVACIFNV) threads the bilayer.

The protein resides in the membrane. This is an uncharacterized protein from Saccharomyces cerevisiae (strain ATCC 204508 / S288c) (Baker's yeast).